Reading from the N-terminus, the 207-residue chain is Peptidyl-tRNA hydrolase (207 aa).

Y30 is a binding site for tRNA. H35 functions as the Proton acceptor in the catalytic mechanism. The tRNA site is built by Y81, N83, and N129.

It belongs to the PTH family. As to quaternary structure, monomer.

The protein resides in the cytoplasm. The enzyme catalyses an N-acyl-L-alpha-aminoacyl-tRNA + H2O = an N-acyl-L-amino acid + a tRNA + H(+). Hydrolyzes ribosome-free peptidyl-tRNAs (with 1 or more amino acids incorporated), which drop off the ribosome during protein synthesis, or as a result of ribosome stalling. Its function is as follows. Catalyzes the release of premature peptidyl moieties from peptidyl-tRNA molecules trapped in stalled 50S ribosomal subunits, and thus maintains levels of free tRNAs and 50S ribosomes. The polypeptide is Peptidyl-tRNA hydrolase (Bordetella avium (strain 197N)).